The following is a 257-amino-acid chain: Ethanolamine ammonia-lyase small subunit (257 aa).

Residues Val153, Glu174, and Cys203 each contribute to the adenosylcob(III)alamin site.

It belongs to the EutC family. As to quaternary structure, the basic unit is a heterodimer which dimerizes to form tetramers. The heterotetramers trimerize; 6 large subunits form a core ring with 6 small subunits projecting outwards. The cofactor is adenosylcob(III)alamin.

Its subcellular location is the bacterial microcompartment. It carries out the reaction ethanolamine = acetaldehyde + NH4(+). It functions in the pathway amine and polyamine degradation; ethanolamine degradation. In terms of biological role, catalyzes the deamination of various vicinal amino-alcohols to oxo compounds. Allows this organism to utilize ethanolamine as the sole source of nitrogen and carbon in the presence of external vitamin B12. The protein is Ethanolamine ammonia-lyase small subunit of Rhodococcus erythropolis (Arthrobacter picolinophilus).